A 220-amino-acid chain; its full sequence is Small ribosomal subunit protein eS1 (220 aa).

This sequence belongs to the eukaryotic ribosomal protein eS1 family.

In Methanococcus vannielii (strain ATCC 35089 / DSM 1224 / JCM 13029 / OCM 148 / SB), this protein is Small ribosomal subunit protein eS1.